Here is a 356-residue protein sequence, read N- to C-terminus: Protein SEC13 homolog (356 aa).

6 WD repeats span residues 11–50, 54–95, 101–142, 149–205, 210–253, and 259–298; these read EHEDMVHHAALDFYGLLLATCSSDGSVRIFHSRKNNKALA, GHQG…DWTK, NHDS…GVWD, AHTI…WVEE, AHSD…SEWT, and TFDDAVWSISWSTTGNILAVTGGDNNVTLWKENTEGQWIR. Residues 307–356 form a disordered region; the sequence is IQSKQPSHLPHSHSQQQQALQQHQQQAPSHPGPSSDSEHSSNLSNSQLSN. A compositionally biased stretch (low complexity) spans 308 to 356; the sequence is QSKQPSHLPHSHSQQQQALQQHQQQAPSHPGPSSDSEHSSNLSNSQLSN.

Belongs to the WD repeat SEC13 family. As to quaternary structure, probable component of the nuclear pore complex (NPC). Component of the GATOR complex consisting of mio, Nup44A/Seh1, Im11, Nplr3, Nplr2, Wdr24, Wdr59 and Sec13. Within the GATOR complex, probable component of the GATOR2 subcomplex which is likely composed of mio, Nup44A/Seh1, Wdr24, Wdr59 and Sec13. Interacts with msk. Interacts (preferentially when phosphorylated) with Mad. The GATOR2 complex associates with unmet in the absence of S-adenosyl-L-methionine; the mio-Wdr24-Nup44A subcomplex is essential and sufficient for this interaction while Wdr59 and Sec13 are dispensable. This association acts as a nutrient sensor to inhibit mTORC1 signaling in the absence of methionine. In terms of tissue distribution, salivary glands.

It localises to the nucleus envelope. It is found in the nucleus. Its subcellular location is the nucleoplasm. The protein localises to the cytoplasm. The protein resides in the cytoskeleton. It localises to the microtubule organizing center. It is found in the centrosome. Its subcellular location is the nuclear pore complex. The protein localises to the cytoplasmic vesicle. The protein resides in the COPII-coated vesicle membrane. It localises to the endoplasmic reticulum membrane. It is found in the lysosome membrane. Its function is as follows. Functions as a component of the nuclear pore complex (NPC) and the COPII coat. At the endoplasmic reticulum, SEC13 is involved in the biogenesis of COPII-coated vesicles. Recruited to transcriptionally active chromatin at the time of transcription initiation by RNA polymerase II. Required for proper expression of ecdysone-responsive genes such as Eip74EF and Eip75B during larval development. Required for reactivation of transcription after heat shock. Required for nuclear import of phosphorylated Mad via importin msk. Has no role in classical nuclear localization signal (cNLS)-dependent nuclear import via importin-beta. A component of the GATOR subcomplex GATOR2 which functions as an activator of the amino acid-sensing branch of the mTORC1 signaling pathway. The two GATOR subcomplexes, GATOR1 and GATOR2, regulate the mTORC1 pathway in order to mediate metabolic homeostasis, female gametogenesis and the response to amino acid limitation and complete starvation. GATOR2 activates the mTORC1 signaling pathway through the inhibition of the GATOR1 subcomplex, controlling the switch to cell proliferation and growth under nutrient replete conditions and during female oocyte development. This Drosophila melanogaster (Fruit fly) protein is Protein SEC13 homolog.